The chain runs to 649 residues: FAS-associated factor 1 (649 aa).

The region spanning 1–57 (MASNMDREMILADFQACTGIENIDEAITLLEQNNWDLVAAINGVIPQENGILQSDFG) is the UBA domain. The disordered stretch occupies residues 55 to 84 (DFGGETMPGPTFDPASPPAPAPAPSSSAFR). Phosphoserine is present on serine 319. A UBX domain is found at 568–645 (NAEPVSKLRI…NLFPQETLFL (78 aa)). Position 579 is a phosphothreonine (threonine 579). A Phosphoserine modification is found at serine 581.

Interacts with CDT1 and ATPase VCP/p97. Interacts (via UBA domain) with FAS (via death domain). Interacts (via UBA domain) with NLRP12 (via DAPIN/PYRIN domain). As to expression, central nervous system.

It localises to the nucleus. Ubiquitin-binding protein. Required for the progression of DNA replication forks by targeting DNA replication licensing factor CDT1 for degradation. Potentiates but cannot initiate FAS-induced apoptosis. The polypeptide is FAS-associated factor 1 (Faf1) (Rattus norvegicus (Rat)).